A 192-amino-acid polypeptide reads, in one-letter code: Probable GTP-binding protein EngB (192 aa).

One can recognise an EngB-type G domain in the interval 22–192 (GRPEIVFVGR…LLASIDTFTQ (171 aa)). GTP is bound by residues 30–37 (GRSNVGKS), 57–61 (GKTRL), 75–78 (DLPG), 142–145 (TKWD), and 172–174 (YSS). 2 residues coordinate Mg(2+): Ser37 and Thr59.

This sequence belongs to the TRAFAC class TrmE-Era-EngA-EngB-Septin-like GTPase superfamily. EngB GTPase family. Mg(2+) serves as cofactor.

Its function is as follows. Necessary for normal cell division and for the maintenance of normal septation. In Chlorobaculum tepidum (strain ATCC 49652 / DSM 12025 / NBRC 103806 / TLS) (Chlorobium tepidum), this protein is Probable GTP-binding protein EngB.